The primary structure comprises 277 residues: S-formylglutathione hydrolase FrmB (277 aa).

Residues Ser145, Asp221, and His254 each act as charge relay system in the active site.

It belongs to the esterase D family.

It catalyses the reaction S-formylglutathione + H2O = formate + glutathione + H(+). Functionally, serine hydrolase involved in the detoxification of formaldehyde. Hydrolyzes S-formylglutathione to glutathione and formate. The polypeptide is S-formylglutathione hydrolase FrmB (frmB) (Escherichia coli O157:H7).